Reading from the N-terminus, the 614-residue chain is Dihydroxy-acid dehydratase (614 aa).

Position 81 (Asp-81) interacts with Mg(2+). Position 122 (Cys-122) interacts with [2Fe-2S] cluster. Asp-123 and Lys-124 together coordinate Mg(2+). Lys-124 carries the N6-carboxylysine modification. Cys-195 is a binding site for [2Fe-2S] cluster. A Mg(2+)-binding site is contributed by Glu-491. Ser-517 acts as the Proton acceptor in catalysis.

Belongs to the IlvD/Edd family. In terms of assembly, homodimer. It depends on [2Fe-2S] cluster as a cofactor. The cofactor is Mg(2+).

It carries out the reaction (2R)-2,3-dihydroxy-3-methylbutanoate = 3-methyl-2-oxobutanoate + H2O. The enzyme catalyses (2R,3R)-2,3-dihydroxy-3-methylpentanoate = (S)-3-methyl-2-oxopentanoate + H2O. The protein operates within amino-acid biosynthesis; L-isoleucine biosynthesis; L-isoleucine from 2-oxobutanoate: step 3/4. It participates in amino-acid biosynthesis; L-valine biosynthesis; L-valine from pyruvate: step 3/4. Functionally, functions in the biosynthesis of branched-chain amino acids. Catalyzes the dehydration of (2R,3R)-2,3-dihydroxy-3-methylpentanoate (2,3-dihydroxy-3-methylvalerate) into 2-oxo-3-methylpentanoate (2-oxo-3-methylvalerate) and of (2R)-2,3-dihydroxy-3-methylbutanoate (2,3-dihydroxyisovalerate) into 2-oxo-3-methylbutanoate (2-oxoisovalerate), the penultimate precursor to L-isoleucine and L-valine, respectively. The sequence is that of Dihydroxy-acid dehydratase from Rhodopseudomonas palustris (strain BisA53).